Here is a 287-residue protein sequence, read N- to C-terminus: MTEHTVSHANGSDLENAKKTYMLANNQKEIERMKNQHEWIKGSFGGLVKAPIDFDKKNQSILDSATADGTWLMDVRSLFPPETELIGFDIAPELYPPEGTRPRNVELVTADLLQGLPAQWIGRFDLVHQRFVFPNFETEVIREVLGRLMQCVKPGGWIQLVEPCAGENVSGPEPKWFLLLHKLANQFMRSAVPRDAILAILHEEGFVNINIESLDIVIGKHQRNKEMDARGRRSMRDSVSNMYPMITAEQLGMPKEEARAVLDKFEADMQKYRTAVRHVIIWAQRPE.

This sequence belongs to the methyltransferase superfamily. LaeA methyltransferase family.

Its pathway is mycotoxin biosynthesis. Its function is as follows. N-methyltransferase; part of the gene cluster that mediates the biosynthesis of 11'-deoxyverticillin A, one of the dimeric epipolythiodioxopiperazines (ETPs) from the verticillin family that act as mycotoxins. 11'-deoxyverticillin A is required for normal conidiation. The nonribosomal peptide synthetase verP is speculated to be responsible for condensation of amino acids to form the carbon skeleton of verticillin, whereas the cluster-specific tailoring enzymes are involved in further modifications leading to the production of 11'-deoxyverticillin A. The protein is N-methyltransferase verN of Clonostachys rogersoniana.